We begin with the raw amino-acid sequence, 93 residues long: Putative defensin-like protein 282 (93 aa).

The N-terminal stretch at 1–25 (MANATSFIALAYLLASALMTTVVLG) is a signal peptide. 3 cysteine pairs are disulfide-bonded: cysteine 51/cysteine 83, cysteine 66/cysteine 90, and cysteine 72/cysteine 92.

Belongs to the DEFL family.

It localises to the secreted. In Arabidopsis thaliana (Mouse-ear cress), this protein is Putative defensin-like protein 282.